The sequence spans 80 residues: Bacteriochlorophyll c-binding protein (80 aa).

Histidine 25 provides a ligand contact to a bacteriochlorophyll c. Residues proline 49–arginine 80 form a disordered region. A propeptide spanning residues serine 54–arginine 80 is cleaved from the precursor. Over residues arginine 70–arginine 80 the composition is skewed to basic residues.

Belongs to the BChl C/E-binding protein family.

It localises to the chlorosome. The protein localises to the chlorosome envelope. In terms of biological role, component of the photosynthetic apparatus. The light harvesting B740 complex binds bacteriochlorophyll c. The protein is Bacteriochlorophyll c-binding protein (cmsA) of Chloroflexus aurantiacus (strain ATCC 29366 / DSM 635 / J-10-fl).